Here is a 113-residue protein sequence, read N- to C-terminus: Large ribosomal subunit protein bL17 (113 aa).

This sequence belongs to the bacterial ribosomal protein bL17 family. In terms of assembly, part of the 50S ribosomal subunit. Contacts protein L32.

In Syntrophomonas wolfei subsp. wolfei (strain DSM 2245B / Goettingen), this protein is Large ribosomal subunit protein bL17.